The following is a 311-amino-acid chain: Aspartate carbamoyltransferase catalytic subunit (311 aa).

2 residues coordinate carbamoyl phosphate: R59 and T60. L-aspartate is bound at residue K87. Carbamoyl phosphate-binding residues include R109, H139, and Q142. Residues R172 and R224 each contribute to the L-aspartate site. Carbamoyl phosphate-binding residues include A265 and P266.

The protein belongs to the aspartate/ornithine carbamoyltransferase superfamily. ATCase family. As to quaternary structure, heterododecamer (2C3:3R2) of six catalytic PyrB chains organized as two trimers (C3), and six regulatory PyrI chains organized as three dimers (R2).

The catalysed reaction is carbamoyl phosphate + L-aspartate = N-carbamoyl-L-aspartate + phosphate + H(+). The protein operates within pyrimidine metabolism; UMP biosynthesis via de novo pathway; (S)-dihydroorotate from bicarbonate: step 2/3. Its function is as follows. Catalyzes the condensation of carbamoyl phosphate and aspartate to form carbamoyl aspartate and inorganic phosphate, the committed step in the de novo pyrimidine nucleotide biosynthesis pathway. The protein is Aspartate carbamoyltransferase catalytic subunit of Streptococcus pyogenes serotype M12 (strain MGAS2096).